Here is a 23-residue protein sequence, read N- to C-terminus: SV40 early leader protein (23 aa).

The interval 1–23 (MQRPRPPRPLSYSRSSEEAFLEA) is disordered.

It belongs to the polyomavirus early leader protein family.

May play a role in the lytic cycle. The sequence is that of SV40 early leader protein from Macaca (macaques).